A 748-amino-acid chain; its full sequence is 5-methyltetrahydropteroyltriglutamate--homocysteine methyltransferase (748 aa).

5-methyltetrahydropteroyltri-L-glutamate is bound by residues 18 to 21 (REWK) and Lys-112. L-homocysteine-binding positions include 420–422 (IGS) and Glu-473. L-methionine-binding positions include 420–422 (IGS) and Glu-473. Trp-550 provides a ligand contact to 5-methyltetrahydropteroyltri-L-glutamate. Asp-588 is an L-homocysteine binding site. Asp-588 serves as a coordination point for L-methionine. Residue Glu-594 coordinates 5-methyltetrahydropteroyltri-L-glutamate. Zn(2+) contacts are provided by His-630, Cys-632, and Glu-654. His-683 acts as the Proton donor in catalysis. Cys-715 is a Zn(2+) binding site.

The protein belongs to the vitamin-B12 independent methionine synthase family. It depends on Zn(2+) as a cofactor.

The enzyme catalyses 5-methyltetrahydropteroyltri-L-glutamate + L-homocysteine = tetrahydropteroyltri-L-glutamate + L-methionine. The protein operates within amino-acid biosynthesis; L-methionine biosynthesis via de novo pathway; L-methionine from L-homocysteine (MetE route): step 1/1. Catalyzes the transfer of a methyl group from 5-methyltetrahydrofolate to homocysteine resulting in methionine formation. The chain is 5-methyltetrahydropteroyltriglutamate--homocysteine methyltransferase from Staphylococcus epidermidis (strain ATCC 12228 / FDA PCI 1200).